Consider the following 113-residue polypeptide: Large ribosomal subunit protein uL22 (113 aa).

It belongs to the universal ribosomal protein uL22 family. As to quaternary structure, part of the 50S ribosomal subunit.

This protein binds specifically to 23S rRNA; its binding is stimulated by other ribosomal proteins, e.g. L4, L17, and L20. It is important during the early stages of 50S assembly. It makes multiple contacts with different domains of the 23S rRNA in the assembled 50S subunit and ribosome. In terms of biological role, the globular domain of the protein is located near the polypeptide exit tunnel on the outside of the subunit, while an extended beta-hairpin is found that lines the wall of the exit tunnel in the center of the 70S ribosome. The sequence is that of Large ribosomal subunit protein uL22 from Chloroflexus aggregans (strain MD-66 / DSM 9485).